A 541-amino-acid chain; its full sequence is Membrane protein insertase YidC (541 aa).

The next 5 membrane-spanning stretches (helical) occupy residues 6-26 (NILL…WQAD), 349-369 (FVGN…GLLF), 420-440 (GGCL…WVLL), 457-477 (LSVQ…MFVM), and 500-520 (VIFT…WLVG).

This sequence belongs to the OXA1/ALB3/YidC family. Type 1 subfamily. In terms of assembly, interacts with the Sec translocase complex via SecD. Specifically interacts with transmembrane segments of nascent integral membrane proteins during membrane integration.

Its subcellular location is the cell inner membrane. Required for the insertion and/or proper folding and/or complex formation of integral membrane proteins into the membrane. Involved in integration of membrane proteins that insert both dependently and independently of the Sec translocase complex, as well as at least some lipoproteins. Aids folding of multispanning membrane proteins. The protein is Membrane protein insertase YidC of Shewanella sp. (strain MR-7).